A 390-amino-acid polypeptide reads, in one-letter code: Probable protein phosphatase 2C 30 (390 aa).

Polar residues predominate over residues 1 to 10 (MQLSKNPIKQ). Disordered regions lie at residues 1-20 (MQLS…NYTD) and 40-85 (PPLV…DSET). Over residues 44-61 (FSPTSVKTPLSSPRSSPP) the composition is skewed to low complexity. One can recognise a PPM-type phosphatase domain in the interval 128 to 385 (YYSVYCKRGR…DDISLIIIQL (258 aa)). Mn(2+) contacts are provided by D166, G167, D331, and D376.

Belongs to the PP2C family. The cofactor is Mg(2+). Mn(2+) is required as a cofactor.

It carries out the reaction O-phospho-L-seryl-[protein] + H2O = L-seryl-[protein] + phosphate. It catalyses the reaction O-phospho-L-threonyl-[protein] + H2O = L-threonyl-[protein] + phosphate. In Arabidopsis thaliana (Mouse-ear cress), this protein is Probable protein phosphatase 2C 30 (PP2C5).